Reading from the N-terminus, the 379-residue chain is Lipid-A-disaccharide synthase (379 aa).

The protein belongs to the LpxB family.

The catalysed reaction is a lipid X + a UDP-2-N,3-O-bis[(3R)-3-hydroxyacyl]-alpha-D-glucosamine = a lipid A disaccharide + UDP + H(+). It functions in the pathway bacterial outer membrane biogenesis; LPS lipid A biosynthesis. Functionally, condensation of UDP-2,3-diacylglucosamine and 2,3-diacylglucosamine-1-phosphate to form lipid A disaccharide, a precursor of lipid A, a phosphorylated glycolipid that anchors the lipopolysaccharide to the outer membrane of the cell. This is Lipid-A-disaccharide synthase from Vibrio parahaemolyticus serotype O3:K6 (strain RIMD 2210633).